A 2241-amino-acid polypeptide reads, in one-letter code: GON-4-like protein (2241 aa).

Disordered stretches follow at residues Met1–Ser46 and Lys122–Gln259. Basic and acidic residues predominate over residues Ser30 to Lys40. Residues Lys122–Thr135 are compositionally biased toward basic residues. Residues Gln143 to Leu152 show a composition bias toward basic and acidic residues. Positions Pro183–Pro201 are enriched in polar residues. Ser206 carries the phosphoserine modification. Residues Arg243–Asp255 are compositionally biased toward basic residues. Ser346 carries the post-translational modification Phosphoserine. Acidic residues predominate over residues Glu366–Val394. Residues Glu366–Ser460 are disordered. The segment at Glu600–Ser1339 is required for interaction with YY1, SIN3A and HDAC1, and transcriptional repression activity. Residue Ser775 is modified to Phosphoserine. Disordered regions lie at residues Pro1008–Pro1031 and Arg1111–Met1131. The span at Arg1111 to Val1125 shows a compositional bias: basic residues. At Ser1268 the chain carries Phosphoserine. 2 disordered regions span residues Ala1301–Asp1320 and Leu1356–Ala1601. Positions Pro1386–Ser1416 are enriched in polar residues. Ser1426 is modified (phosphoserine). Residues Ser1434–Gly1443 are compositionally biased toward polar residues. Acidic residues-rich tracts occupy residues Glu1458–Met1476 and Gly1510–Gly1534. Over residues Arg1586 to Arg1600 the composition is skewed to basic residues. PAH domains lie at Glu1624–Glu1696 and Glu1706–Leu1777. Residues Pro1809–Arg1960 are disordered. Basic and acidic residues-rich tracts occupy residues Asn1836–Lys1848 and Cys1879–Ala1901. 3 positions are modified to phosphoserine: Ser1896, Ser1902, and Ser1977. Disordered regions lie at residues Glu2002–Glu2025, Glu2039–Thr2149, and Cys2208–Glu2241. Ser2107 is modified (phosphoserine). Residues Cys2140–Thr2149 show a composition bias toward polar residues. The Myb-like domain occupies Ser2148–Met2201.

In terms of assembly, found in a complex with YY1, SIN3A and HDAC1.

The protein resides in the nucleus. Its function is as follows. Has transcriptional repressor activity, probably as part of a complex with YY1, SIN3A and HDAC1. Required for B cell lymphopoiesis. This Homo sapiens (Human) protein is GON-4-like protein (GON4L).